The primary structure comprises 170 residues: Large ribosomal subunit protein uL22c (170 aa).

The protein belongs to the universal ribosomal protein uL22 family. As to quaternary structure, part of the 50S ribosomal subunit.

Its subcellular location is the plastid. It is found in the chloroplast. In terms of biological role, this protein binds specifically to 23S rRNA. Its function is as follows. The globular domain of the protein is located near the polypeptide exit tunnel on the outside of the subunit, while an extended beta-hairpin is found that lines the wall of the exit tunnel in the center of the 70S ribosome. In Nandina domestica (Heavenly bamboo), this protein is Large ribosomal subunit protein uL22c (rpl22).